A 464-amino-acid chain; its full sequence is Soluble pyridine nucleotide transhydrogenase (464 aa).

Position 35-44 (35-44 (DNRPLVGGNC)) interacts with FAD.

The protein belongs to the class-I pyridine nucleotide-disulfide oxidoreductase family. Requires FAD as cofactor.

Its subcellular location is the cytoplasm. It carries out the reaction NAD(+) + NADPH = NADH + NADP(+). In terms of biological role, conversion of NADPH, generated by peripheral catabolic pathways, to NADH, which can enter the respiratory chain for energy generation. The protein is Soluble pyridine nucleotide transhydrogenase of Stutzerimonas stutzeri (strain A1501) (Pseudomonas stutzeri).